Consider the following 237-residue polypeptide: Demethylmenaquinone methyltransferase (237 aa).

S-adenosyl-L-methionine-binding positions include Thr-58, Asp-79, and 106–107 (NA).

Belongs to the class I-like SAM-binding methyltransferase superfamily. MenG/UbiE family.

The catalysed reaction is a 2-demethylmenaquinol + S-adenosyl-L-methionine = a menaquinol + S-adenosyl-L-homocysteine + H(+). It functions in the pathway quinol/quinone metabolism; menaquinone biosynthesis; menaquinol from 1,4-dihydroxy-2-naphthoate: step 2/2. Methyltransferase required for the conversion of demethylmenaquinol (DMKH2) to menaquinol (MKH2). This chain is Demethylmenaquinone methyltransferase, found in Bacillus cereus (strain B4264).